Consider the following 372-residue polypeptide: Putative glutamate--cysteine ligase 2 (372 aa).

It belongs to the glutamate--cysteine ligase type 2 family. YbdK subfamily. Homodimer.

The enzyme catalyses L-cysteine + L-glutamate + ATP = gamma-L-glutamyl-L-cysteine + ADP + phosphate + H(+). ATP-dependent carboxylate-amine ligase which exhibits weak glutamate--cysteine ligase activity. This chain is Putative glutamate--cysteine ligase 2 (ybdK), found in Salmonella paratyphi A (strain AKU_12601).